We begin with the raw amino-acid sequence, 168 residues long: Lipoprotein signal peptidase (168 aa).

2 helical membrane-spanning segments follow: residues 57-77 (PKEV…LYVF) and 86-106 (FILP…DRIT). Active-site residues include Asp112 and Asp138. The chain crosses the membrane as a helical span at residues 131–151 (WPIFNIADSAITIGACLLILF).

It belongs to the peptidase A8 family.

The protein localises to the cell inner membrane. It catalyses the reaction Release of signal peptides from bacterial membrane prolipoproteins. Hydrolyzes -Xaa-Yaa-Zaa-|-(S,diacylglyceryl)Cys-, in which Xaa is hydrophobic (preferably Leu), and Yaa (Ala or Ser) and Zaa (Gly or Ala) have small, neutral side chains.. It participates in protein modification; lipoprotein biosynthesis (signal peptide cleavage). This protein specifically catalyzes the removal of signal peptides from prolipoproteins. The protein is Lipoprotein signal peptidase of Chlorobium phaeobacteroides (strain DSM 266 / SMG 266 / 2430).